The sequence spans 883 residues: Glutamate receptor 2 (883 aa).

The signal sequence occupies residues M1–S24. Residues N25–A543 lie on the Extracellular side of the membrane. An intrachain disulfide couples C78 to C330. Residues N256, N370, N406, and N413 are each glycosylated (N-linked (GlcNAc...) asparagine). 3 residues coordinate L-glutamate: P499, T501, and R506. The helical transmembrane segment at Y544–V564 threads the bilayer. The Cytoplasmic portion of the chain corresponds to S565–E591. The segment at residues F592–R607 is an intramembrane region (helical; Pore-forming). The stretch at Q608–C610 is an intramembrane region. Residue C610 is the site of S-palmitoyl cysteine attachment. Residues D611–S616 lie on the Cytoplasmic side of the membrane. A helical transmembrane segment spans residues L617–Y637. Residues T638–N812 lie on the Extracellular side of the membrane. L-glutamate contacts are provided by S675 and T676. The residue at position 683 (S683) is a Phosphoserine; by PKC. The residue at position 717 (S717) is a Phosphoserine; by PKG. E726 lines the L-glutamate pocket. C739 and C794 form a disulfide bridge. Residues V813–I833 traverse the membrane as a helical segment. Over E834–I883 the chain is Cytoplasmic. Residue C836 is the site of S-palmitoyl cysteine attachment. S860 and S863 each carry phosphoserine. A required for interaction with IQSEC1 region spans residues A867–G877. Residue Y876 is modified to Phosphotyrosine. The residue at position 880 (S880) is a Phosphoserine.

This sequence belongs to the glutamate-gated ion channel (TC 1.A.10.1) family. GRIA2 subfamily. As to quaternary structure, homotetramer or heterotetramer of pore-forming glutamate receptor subunits. Tetramers may be formed by the dimerization of dimers. May interact with MPP4. Forms a ternary complex with GRIP1 and CSPG4. Interacts with ATAD1 in an ATP-dependent manner. ATAD1-catalyzed ATP hydrolysis disrupts binding to ATAD1 and to GRIP1 and leads to AMPAR complex disassembly. Interacts with GRIP1 and GRIP2. Interacts with NSF via its C-terminus. Isoform 1, but not isoform 3, interacts with PICK1. Interacts with CACNG2. Interacts with GRIA1 and SYNDIG1. Part of a complex containing GRIA2, NSF and NAPA and/or NAPB. Interacts with SNX27 (via PDZ domain); the interaction is required for recycling to the plasma membrane when endocytosed and prevent degradation in lysosomes. Interacts with LRFN1. Found in a complex with GRIA1, GRIA3, GRIA4, CNIH2, CNIH3, CACNG2, CACNG3, CACNG4, CACNG5, CACNG7 and CACNG8. Interacts with CACNG5. Interacts with OLFM2. Interacts with AP4B1, AP4E1 and AP4M1; probably indirect it mediates the somatodendritic localization of GRIA2 in neurons. Forms a complex with GRIP1, NSG1 and STX12; controls the intracellular fate of AMPAR and the endosomal sorting of the GRIA2 subunit toward recycling and membrane targeting. Interacts with IQSEC1; the interaction is required for ARF6 activation. Interacts (heterotetramer form) with CNIH2 and CNIH3; this interaction promotes expression at the plasma membrane and extensively modulates their gating properties by slowing deactivation and desensitization kinetics. Phosphorylation at Tyr-876 is required for interaction with IQSEC1 and ARF6 activation, which in turn triggers AMPAR internalization for persistent synaptic depression. Post-translationally, palmitoylated. Depalmitoylated upon L-glutamate stimulation. ZDHHC3/GODZ specifically palmitoylates Cys-610, which leads to Golgi retention and decreased cell surface expression. In contrast, Cys-836 palmitoylation does not affect cell surface expression but regulates stimulation-dependent endocytosis. In terms of processing, N-glycosylated. Ubiquitinated by RNF167, leading to its degradation.

It is found in the cell membrane. Its subcellular location is the postsynaptic cell membrane. The protein localises to the postsynaptic density membrane. The enzyme catalyses Ca(2+)(in) = Ca(2+)(out). The catalysed reaction is Na(+)(in) = Na(+)(out). Functionally, ionotropic glutamate receptor that functions as a ligand-gated cation channel, gated by L-glutamate and glutamatergic agonists such as alpha-amino-3-hydroxy-5-methyl-4-isoxazolepropionic acid (AMPA), quisqualic acid, and kainic acid. L-glutamate acts as an excitatory neurotransmitter at many synapses in the central nervous system and plays an important role in fast excitatory synaptic transmission. Binding of the excitatory neurotransmitter L-glutamate induces a conformation change, leading to the opening of the cation channel, and thereby converts the chemical signal to an electrical impulse upon entry of monovalent and divalent cations such as sodium and calcium. The receptor then desensitizes rapidly and enters in a transient inactive state, characterized by the presence of bound agonist. In the presence of CACNG4 or CACNG7 or CACNG8, shows resensitization which is characterized by a delayed accumulation of current flux upon continued application of L-glutamate. Through complex formation with NSG1, GRIP1 and STX12 controls the intracellular fate of AMPAR and the endosomal sorting of the GRIA2 subunit toward recycling and membrane targeting. This chain is Glutamate receptor 2, found in Macaca fascicularis (Crab-eating macaque).